A 359-amino-acid polypeptide reads, in one-letter code: 3-dehydroquinate synthase (359 aa).

NAD(+) is bound by residues 69–74 (DGEQHK), 103–107 (GVIGD), 127–128 (TT), lysine 140, lysine 149, and 167–170 (TLDT). Glutamate 182, histidine 245, and histidine 262 together coordinate Zn(2+).

The protein belongs to the sugar phosphate cyclases superfamily. Dehydroquinate synthase family. The cofactor is Co(2+). Zn(2+) serves as cofactor. NAD(+) is required as a cofactor.

The protein localises to the cytoplasm. The enzyme catalyses 7-phospho-2-dehydro-3-deoxy-D-arabino-heptonate = 3-dehydroquinate + phosphate. The protein operates within metabolic intermediate biosynthesis; chorismate biosynthesis; chorismate from D-erythrose 4-phosphate and phosphoenolpyruvate: step 2/7. Its function is as follows. Catalyzes the conversion of 3-deoxy-D-arabino-heptulosonate 7-phosphate (DAHP) to dehydroquinate (DHQ). In Nitrosococcus oceani (strain ATCC 19707 / BCRC 17464 / JCM 30415 / NCIMB 11848 / C-107), this protein is 3-dehydroquinate synthase.